The chain runs to 178 residues: MSRIGNKVIVLPAGVEISNKDNVVTVKGPKGELTREFSKDIEIRVEGTEVTLHRPNDSKEMKTIHGTTRALLNNMVVGVSEGFKKELEMRGVGYRAQLQGKKLVLSVGKSHPDEVEAPEGITFELPNPTTIVVSGISKEVVGQTAAYVRSLRAPEPYKGKGIRYVGEFVRRKEGKTGK.

The protein belongs to the universal ribosomal protein uL6 family. As to quaternary structure, part of the 50S ribosomal subunit.

This protein binds to the 23S rRNA, and is important in its secondary structure. It is located near the subunit interface in the base of the L7/L12 stalk, and near the tRNA binding site of the peptidyltransferase center. This chain is Large ribosomal subunit protein uL6, found in Streptococcus sanguinis (strain SK36).